A 333-amino-acid chain; its full sequence is tRNA N6-adenosine threonylcarbamoyltransferase (333 aa).

His-111 and His-115 together coordinate Fe cation. Substrate is bound by residues 134-138 (LVSGG), Asp-167, Gly-180, and Asn-272. Residue Asp-300 coordinates Fe cation.

The protein belongs to the KAE1 / TsaD family. Fe(2+) is required as a cofactor.

It is found in the cytoplasm. It carries out the reaction L-threonylcarbamoyladenylate + adenosine(37) in tRNA = N(6)-L-threonylcarbamoyladenosine(37) in tRNA + AMP + H(+). Functionally, required for the formation of a threonylcarbamoyl group on adenosine at position 37 (t(6)A37) in tRNAs that read codons beginning with adenine. Is involved in the transfer of the threonylcarbamoyl moiety of threonylcarbamoyl-AMP (TC-AMP) to the N6 group of A37, together with TsaE and TsaB. TsaD likely plays a direct catalytic role in this reaction. The polypeptide is tRNA N6-adenosine threonylcarbamoyltransferase (Hamiltonella defensa subsp. Acyrthosiphon pisum (strain 5AT)).